The primary structure comprises 311 residues: Malate dehydrogenase (311 aa).

NAD(+) contacts are provided by residues 7–13 and D34; that span reads GAAGGIG. Residues R81 and R87 each coordinate substrate. NAD(+) contacts are provided by residues N94 and 117 to 119; that span reads ITN. Substrate-binding residues include N119 and R153. H177 (proton acceptor) is an active-site residue. M227 contacts NAD(+).

The protein belongs to the LDH/MDH superfamily. MDH type 1 family. In terms of assembly, homodimer.

It catalyses the reaction (S)-malate + NAD(+) = oxaloacetate + NADH + H(+). In terms of biological role, catalyzes the reversible oxidation of malate to oxaloacetate. The protein is Malate dehydrogenase of Vibrio campbellii (strain ATCC BAA-1116).